The primary structure comprises 331 residues: Laforin (331 aa).

The 124-residue stretch at 1–124 (MRFRFGVVVP…NNLVDGVYCL (124 aa)) folds into the CBM20 domain. At serine 25 the chain carries Phosphoserine; by AMPK. Substrate-binding positions include tryptophan 32, lysine 87, 103-107 (GPHHD), aspartate 197, aspartate 235, and arginine 241. Residues 156–323 (HYSRILPNIW…EEDFFQKFGK (168 aa)) enclose the Tyrosine-protein phosphatase domain. Cysteine 266 serves as the catalytic Phosphocysteine intermediate. Residues 266 to 272 (CNAGVGR) carry the Glucan phosphatase signature motif CXAGXGR motif. Substrate-binding positions include 267 to 272 (NAGVGR) and tyrosine 304.

It belongs to the protein-tyrosine phosphatase family. As to quaternary structure, homodimer. Interacts with itself. Interacts with PPP1R3B, PPP1R3C, PPP1R3D, HIRIP5, and EPM2AIP1. Binds glycogen and Lafora bodies. Interacts with NHLRC1/malin (via the NHL repeats). Forms a complex with NHLRC1/malin and HSP70. Interacts with PPP1R3D; in the presence of NHLC1/malin the interaction leads to ubiquitination and autophagic degradation of PPP1R3D. Interacts (via the phosphatase domain) with MAPT/Tau; the interaction dephosphorylates MAPT. Interacts with PRDM8. Polyubiquitinated by NHLRC1/malin. Post-translationally, phosphorylation on Ser-25 by AMPK affects the phosphatase activity of the enzyme and its ability to homodimerize and interact with NHLRC1, PPP1R3C or PRKAA2.

Its subcellular location is the cytoplasm. It is found in the endoplasmic reticulum membrane. The protein resides in the cell membrane. The enzyme catalyses O-phospho-L-tyrosyl-[protein] + H2O = L-tyrosyl-[protein] + phosphate. It carries out the reaction O-phospho-L-seryl-[protein] + H2O = L-seryl-[protein] + phosphate. The catalysed reaction is O-phospho-L-threonyl-[protein] + H2O = L-threonyl-[protein] + phosphate. Its function is as follows. Plays an important role in preventing glycogen hyperphosphorylation and the formation of insoluble aggregates, via its activity as glycogen phosphatase, and by promoting the ubiquitination of proteins involved in glycogen metabolism via its interaction with the E3 ubiquitin ligase NHLRC1/malin. Dephosphorylates phosphotyrosine and synthetic substrates, such as para-nitrophenylphosphate (pNPP), and has low activity with phosphoserine and phosphothreonine substrates (in vitro). Has also been shown to dephosphorylate MAPT. Shows strong phosphatase activity towards complex carbohydrates in vitro, avoiding glycogen hyperphosphorylation which is associated with reduced branching and formation of insoluble aggregates. Forms a complex with NHLRC1/malin and HSP70, which suppresses the cellular toxicity of misfolded proteins by promoting their degradation through the ubiquitin-proteasome system (UPS). Acts as a scaffold protein to facilitate PPP1R3C/PTG ubiquitination by NHLRC1/malin. Also promotes proteasome-independent protein degradation through the macroautophagy pathway. This is Laforin (EPM2A) from Canis lupus familiaris (Dog).